The chain runs to 356 residues: DNA polymerase IV (356 aa).

The region spanning 7 to 188 is the UmuC domain; the sequence is IIHIDMDAFY…IPVTKFYGVG (182 aa). Mg(2+) is bound by residues aspartate 11 and aspartate 106. Residue glutamate 107 is part of the active site.

This sequence belongs to the DNA polymerase type-Y family. As to quaternary structure, monomer. Mg(2+) serves as cofactor.

Its subcellular location is the cytoplasm. The catalysed reaction is DNA(n) + a 2'-deoxyribonucleoside 5'-triphosphate = DNA(n+1) + diphosphate. Functionally, poorly processive, error-prone DNA polymerase involved in untargeted mutagenesis. Copies undamaged DNA at stalled replication forks, which arise in vivo from mismatched or misaligned primer ends. These misaligned primers can be extended by PolIV. Exhibits no 3'-5' exonuclease (proofreading) activity. May be involved in translesional synthesis, in conjunction with the beta clamp from PolIII. This Listeria welshimeri serovar 6b (strain ATCC 35897 / DSM 20650 / CCUG 15529 / CIP 8149 / NCTC 11857 / SLCC 5334 / V8) protein is DNA polymerase IV.